A 404-amino-acid polypeptide reads, in one-letter code: Cysteine desulfurase IscS (404 aa).

Pyridoxal 5'-phosphate contacts are provided by residues 75 to 76 (AT), Asn-155, Gln-183, and 203 to 205 (SGH). Lys-206 carries the post-translational modification N6-(pyridoxal phosphate)lysine. Thr-243 is a binding site for pyridoxal 5'-phosphate. Cys-328 serves as the catalytic Cysteine persulfide intermediate. Cys-328 serves as a coordination point for [2Fe-2S] cluster.

Belongs to the class-V pyridoxal-phosphate-dependent aminotransferase family. NifS/IscS subfamily. Homodimer. Forms a heterotetramer with IscU, interacts with other sulfur acceptors. Requires pyridoxal 5'-phosphate as cofactor.

The protein resides in the cytoplasm. The enzyme catalyses (sulfur carrier)-H + L-cysteine = (sulfur carrier)-SH + L-alanine. It participates in cofactor biosynthesis; iron-sulfur cluster biosynthesis. Master enzyme that delivers sulfur to a number of partners involved in Fe-S cluster assembly, tRNA modification or cofactor biosynthesis. Catalyzes the removal of elemental sulfur and selenium atoms from cysteine and selenocysteine to produce alanine. Functions as a sulfur delivery protein for Fe-S cluster synthesis onto IscU, an Fe-S scaffold assembly protein, as well as other S acceptor proteins. Also functions as a selenium delivery protein in the pathway for the biosynthesis of selenophosphate. This chain is Cysteine desulfurase IscS, found in Salmonella paratyphi C (strain RKS4594).